We begin with the raw amino-acid sequence, 172 residues long: MAQHQVNYASAAGLPIALTSVDKLVNWGRSNSLWPLTYGLACCAIEMMASGASRYDFDRMGTIFRASPRQADVMILAGTLSKKHSEFARRLYDQMTEPKWVISMGSCANTGGMFNTYATVQGVDRIIPVDIYLPGCAPRPETLQYALMMLQKKIRRESANMNNNTKQNLRLV.

Cys42, Cys43, Cys107, and Cys136 together coordinate [4Fe-4S] cluster.

This sequence belongs to the complex I 20 kDa subunit family. NDH-1 is composed of 14 different subunits. Subunits NuoB, C, D, E, F, and G constitute the peripheral sector of the complex. Requires [4Fe-4S] cluster as cofactor.

The protein resides in the cell inner membrane. The enzyme catalyses a quinone + NADH + 5 H(+)(in) = a quinol + NAD(+) + 4 H(+)(out). NDH-1 shuttles electrons from NADH, via FMN and iron-sulfur (Fe-S) centers, to quinones in the respiratory chain. The immediate electron acceptor for the enzyme in this species is believed to be ubiquinone. Couples the redox reaction to proton translocation (for every two electrons transferred, four hydrogen ions are translocated across the cytoplasmic membrane), and thus conserves the redox energy in a proton gradient. This Sulfurovum sp. (strain NBC37-1) protein is NADH-quinone oxidoreductase subunit B.